Consider the following 1490-residue polypeptide: Leucine-rich repeat-containing protein 7 (1490 aa).

17 LRR repeats span residues 23 to 44 (IISV…VFNF), 47 to 68 (TLEE…LFNC), 70 to 91 (ALRK…IASL), 93 to 114 (NLKE…IKCC), 116 to 137 (CLTI…FTQL), 139 to 161 (NLTQ…GRLV), 162 to 183 (KLRI…MHKL), 185 to 206 (QLER…LDQI), 208 to 229 (NLRE…IGKL), 231 to 253 (MLVY…SGCE), 254 to 275 (ALED…IGLL), 277 to 298 (KLTT…IGNL), 300 to 321 (LLEE…IGYL), 323 to 344 (SLRT…IGSC), 346 to 367 (NVTV…IGQM), 369 to 391 (RLRV…TKLK), and 392 to 413 (ELAA…QTEA). A phosphoserine mark is found at S439, S441, and S443. Residues 663 to 676 (KKESTDESEVDKTH) are compositionally biased toward basic and acidic residues. Disordered regions lie at residues 663–709 (KKES…VGSL), 775–808 (DNTG…HGRR), and 822–899 (ELEQ…YHDP). Residues 677-686 (CLNNSVSSGT) show a composition bias toward polar residues. The segment covering 687–700 (YSDYSPSQASSASS) has biased composition (low complexity). Residues 787 to 799 (ENANNNPLLSSKA) show a composition bias toward polar residues. Residue T831 is modified to Phosphothreonine. S850 is subject to Phosphoserine. A compositionally biased stretch (low complexity) spans 859–871 (PSKLETTPTTSPL). A Phosphothreonine modification is found at T865. Position 869 is a phosphoserine (S869). The span at 872 to 882 (PERKDHMKEPT) shows a compositional bias: basic and acidic residues. Residues S947, S949, and S1118 each carry the phosphoserine modification. R1149 bears the Omega-N-methylarginine mark. Residues 1194-1217 (LTQRRPLSARSYSTESYGASQTRP) show a composition bias toward polar residues. Residues 1194-1218 (LTQRRPLSARSYSTESYGASQTRPV) are disordered. Residue S1233 is modified to Phosphoserine. Disordered stretches follow at residues 1238 to 1265 (GNYG…SCGK) and 1282 to 1312 (RLDR…PYPL). Positions 1243–1263 (KTSDNSDIKTRPTPVKGEESC) are enriched in basic and acidic residues. The segment covering 1286–1307 (TPSQQSNILDNGQEDVSPSGQW) has biased composition (polar residues). 2 positions are modified to phosphoserine: S1288 and S1392. Positions 1398-1488 (EQFCVRIEKN…TVDLVIQREL (91 aa)) constitute a PDZ domain.

It belongs to the LAP (LRR and PDZ) protein family. Interacts with CNKSR2 and DLG4. Interacts with CTNND2/Catenin delta-2. Forms a complex with N-cadherin through CTNND2. Interacts with CAMK2A. Post-translationally, O-glycosylated and phosphorylated. Brain-specific. Highly concentrated at synapses.

Its subcellular location is the cytoplasm. The protein resides in the postsynaptic density. In terms of biological role, required for normal synaptic spine architecture and function. Necessary for DISC1 and GRM5 localization to postsynaptic density complexes and for both N-methyl D-aspartate receptor-dependent and metabotropic glutamate receptor-dependent long term depression. The protein is Leucine-rich repeat-containing protein 7 (Lrrc7) of Rattus norvegicus (Rat).